The sequence spans 135 residues: Holo-[acyl-carrier-protein] synthase (135 aa).

2 residues coordinate Mg(2+): D7 and E57.

The protein belongs to the P-Pant transferase superfamily. AcpS family. Mg(2+) is required as a cofactor.

Its subcellular location is the cytoplasm. It catalyses the reaction apo-[ACP] + CoA = holo-[ACP] + adenosine 3',5'-bisphosphate + H(+). Its function is as follows. Transfers the 4'-phosphopantetheine moiety from coenzyme A to a Ser of acyl-carrier-protein. The protein is Holo-[acyl-carrier-protein] synthase of Corynebacterium glutamicum (strain ATCC 13032 / DSM 20300 / JCM 1318 / BCRC 11384 / CCUG 27702 / LMG 3730 / NBRC 12168 / NCIMB 10025 / NRRL B-2784 / 534).